We begin with the raw amino-acid sequence, 281 residues long: Protein DOG1-like 1 (281 aa).

A DOG1 domain is found at E9 to R265. The tract at residues R262–E281 is disordered.

The sequence is that of Protein DOG1-like 1 from Arabidopsis thaliana (Mouse-ear cress).